We begin with the raw amino-acid sequence, 322 residues long: MWRLAITRVFNDKFKNRFSDSYIMELKRENVLIEALPYMQEFYDSIMVIKVGGNAMVSAQIMEDIIKDIVLLRYVGIKPVIVHGGGPEITEKMGRMGKKAEFFQGLRITDDETMEIAKMVLVGNINTKIVSLIGVCGGKGIGLTGYDGRMILGHKQAAKKVLINGIETEVDIGWVGECEVINPDILHIVLENGYIPVISPIAVDAKGNALNINADIVAGDIAAALHAKKLILMTDVSGLLRDMNDPNSHISRVTLEDIDHLIAEGVIQGGMIPKLKGAAVAVKNGVEKAHIINGSVSHSMLLELFTDRGIGTMVYKFEKPKN.

Substrate contacts are provided by residues 85-86, Arg107, and Asn211; that span reads GG.

Belongs to the acetylglutamate kinase family. ArgB subfamily.

It is found in the cytoplasm. The enzyme catalyses N-acetyl-L-glutamate + ATP = N-acetyl-L-glutamyl 5-phosphate + ADP. Its pathway is amino-acid biosynthesis; L-arginine biosynthesis; N(2)-acetyl-L-ornithine from L-glutamate: step 2/4. In terms of biological role, catalyzes the ATP-dependent phosphorylation of N-acetyl-L-glutamate. This chain is Acetylglutamate kinase, found in Methanosarcina barkeri (strain Fusaro / DSM 804).